We begin with the raw amino-acid sequence, 197 residues long: Probable 26S proteasome non-ATPase regulatory subunit 9 (197 aa).

The region spanning 75-166 is the PDZ domain; sequence KIVVEMENEN…KIIRVTVIRE (92 aa).

It belongs to the proteasome subunit p27 family.

Acts as a chaperone during the assembly of the 26S proteasome, specifically of the base subcomplex of the 19S regulatory complex (RC). The sequence is that of Probable 26S proteasome non-ATPase regulatory subunit 9 (psmd-9) from Caenorhabditis elegans.